We begin with the raw amino-acid sequence, 83 residues long: MKGQMIICLVLIALCMSVVVMAQNLRAEELEKANPKDERVRSFERNQKRACKDYLPKSECTQFRCRTSMKYKYTNCKKTCGTC.

Residues 1-22 (MKGQMIICLVLIALCMSVVVMA) form the signal peptide. Positions 23-49 (QNLRAEELEKANPKDERVRSFERNQKR) are excised as a propeptide. Residues 51–83 (CKDYLPKSECTQFRCRTSMKYKYTNCKKTCGTC) form the ShKT domain. 3 disulfides stabilise this stretch: cysteine 51–cysteine 83, cysteine 60–cysteine 76, and cysteine 65–cysteine 80.

This sequence belongs to the sea anemone type 1 potassium channel toxin family. Type 1a subfamily.

It is found in the secreted. The protein localises to the nematocyst. In terms of biological role, specifically, dose-dependently and potently blocks the voltage-gated potassium channel Kv1.1/KCNA1 (Ki=1.6 pM). Moderately blocks potassium channel heterotetramers formed by 3 subunits of Kv1.1/KCNA1 and 1 subunit of Kv1.2/KCNA2 (Ki=56 nM) and weakly blocks those formed by 2 subunits of Kv1.1/KCNA1 and 2 subunits of Kv1.2/KCNA2 (Ki=14 nM). This is Kappa-actitoxin-Aer3a from Anemonia erythraea (Sea anemone).